The sequence spans 404 residues: Major outer membrane porin (404 aa).

The first 22 residues, 1-22 (MKKLLKSVLAFAVLGSASSLHA), serve as a signal peptide directing secretion. Positions 85–110 (GPVPTTTDTDAAADITTSTPRENPAY) are disordered. Residues 89 to 103 (TTTDTDAAADITTST) show a composition bias toward low complexity.

The protein belongs to the chlamydial porin (CP) (TC 1.B.2) family. Part of a disulfide cross-linked outer membrane complex (COMC) composed of the major outer membrane porin (MOMP), the small cysteine-rich protein (OmcA) and the large cysteine-rich periplasmic protein (OmcB).

It localises to the cell outer membrane. In terms of biological role, in elementary bodies (EBs, the infectious stage, which is able to survive outside the host cell) provides the structural integrity of the outer envelope through disulfide cross-links with the small cysteine-rich protein and the large cysteine-rich periplasmic protein. It has been described in publications as the Sarkosyl-insoluble COMC (Chlamydia outer membrane complex), and serves as the functional equivalent of peptidoglycan. Functionally, permits diffusion of specific solutes through the outer membrane. This Chlamydia muridarum protein is Major outer membrane porin (ompA).